Reading from the N-terminus, the 1465-residue chain is Protein clueless (1465 aa).

A disordered region spans residues 1 to 87 (MALEIDAKNA…SNGHSENGDA (87 aa)). The segment covering 30–51 (HNNNNNAPAAGEKNLVNGSSAA) has biased composition (low complexity). A compositionally biased stretch (basic residues) spans 52–61 (TKKKGKKNRN). A Phosphoserine modification is found at Ser-273. In terms of domain architecture, Clu spans 427 to 669 (RAEDAFSSKL…RTFPPDVNFL (243 aa)). A compositionally biased stretch (basic and acidic residues) spans 742 to 767 (AEKQEEPNEEQPEKTEEQPAEKEESK). Disordered stretches follow at residues 742 to 776 (AEKQEEPNEEQPEKTEEQPAEKEESKPTPSETKSA) and 962 to 1021 (VSSD…SNSD). Over residues 970-986 (KQPRNNSGKHNKHKAAK) the composition is skewed to basic residues. Composition is skewed to low complexity over residues 987–1003 (ASKPQAAAAQNGNATAA) and 1010–1020 (ATTSGATSSNS). 3 TPR repeats span residues 1114-1147 (AYNFYTTGQAKIQQGMLKEGYELISEALNLLNNV), 1240-1273 (ALIDSNISLILHALGEYELSLRFIEHALKLNLKY), and 1275-1308 (GNKAMHVAVSYHLMARIQSCMGDFRSALNNEKET). A disordered region spans residues 1428 to 1465 (NNNDNASETEQPKDEASAAGTPTQLTNGSEESTATVSS). Positions 1447–1465 (GTPTQLTNGSEESTATVSS) are enriched in polar residues.

It belongs to the CLU family.

It is found in the cytoplasm. Its function is as follows. mRNA-binding protein involved in proper cytoplasmic distribution of mitochondria. The protein is Protein clueless of Drosophila virilis (Fruit fly).